The primary structure comprises 454 residues: Bifunctional protein GlmU (454 aa).

The pyrophosphorylase stretch occupies residues 1–226; it reads MSLEIVILAA…AMEVQGVNDR (226 aa). Residues 8–11, K22, Q73, 78–79, 99–101, G136, E151, N166, and N224 contribute to the UDP-N-acetyl-alpha-D-glucosamine site; these read LAAG, GT, and YGD. D101 contributes to the Mg(2+) binding site. N224 is a Mg(2+) binding site. Positions 227-247 are linker; it reads MQQAQLERHYQRLRAEELMRQ. Residues 248–454 form an N-acetyltransferase region; that stretch reads GVTLLDPQRL…NWKRPEKIKK (207 aa). The UDP-N-acetyl-alpha-D-glucosamine site is built by R330 and K348. H360 (proton acceptor) is an active-site residue. Residues Y363 and N374 each coordinate UDP-N-acetyl-alpha-D-glucosamine. Residues A377, 383-384, S402, A420, and R437 contribute to the acetyl-CoA site; that span reads NY.

In the N-terminal section; belongs to the N-acetylglucosamine-1-phosphate uridyltransferase family. This sequence in the C-terminal section; belongs to the transferase hexapeptide repeat family. Homotrimer. The cofactor is Mg(2+).

It is found in the cytoplasm. It carries out the reaction alpha-D-glucosamine 1-phosphate + acetyl-CoA = N-acetyl-alpha-D-glucosamine 1-phosphate + CoA + H(+). The enzyme catalyses N-acetyl-alpha-D-glucosamine 1-phosphate + UTP + H(+) = UDP-N-acetyl-alpha-D-glucosamine + diphosphate. Its pathway is nucleotide-sugar biosynthesis; UDP-N-acetyl-alpha-D-glucosamine biosynthesis; N-acetyl-alpha-D-glucosamine 1-phosphate from alpha-D-glucosamine 6-phosphate (route II): step 2/2. It functions in the pathway nucleotide-sugar biosynthesis; UDP-N-acetyl-alpha-D-glucosamine biosynthesis; UDP-N-acetyl-alpha-D-glucosamine from N-acetyl-alpha-D-glucosamine 1-phosphate: step 1/1. It participates in bacterial outer membrane biogenesis; LPS lipid A biosynthesis. Its function is as follows. Catalyzes the last two sequential reactions in the de novo biosynthetic pathway for UDP-N-acetylglucosamine (UDP-GlcNAc). The C-terminal domain catalyzes the transfer of acetyl group from acetyl coenzyme A to glucosamine-1-phosphate (GlcN-1-P) to produce N-acetylglucosamine-1-phosphate (GlcNAc-1-P), which is converted into UDP-GlcNAc by the transfer of uridine 5-monophosphate (from uridine 5-triphosphate), a reaction catalyzed by the N-terminal domain. This chain is Bifunctional protein GlmU, found in Pseudomonas aeruginosa (strain ATCC 15692 / DSM 22644 / CIP 104116 / JCM 14847 / LMG 12228 / 1C / PRS 101 / PAO1).